Consider the following 460-residue polypeptide: G2/mitotic-specific cyclin-4 (460 aa).

It belongs to the cyclin family. Cyclin AB subfamily.

In terms of biological role, essential for the control of the cell cycle at the G2/M (mitosis) transition. Interacts with the CDC2 protein kinase to form MPF. G2/M cyclins accumulate steadily during G2 and are abruptly destroyed at mitosis. The polypeptide is G2/mitotic-specific cyclin-4 (CLB4) (Saccharomyces cerevisiae (strain ATCC 204508 / S288c) (Baker's yeast)).